Consider the following 476-residue polypeptide: Ribosomal RNA small subunit methyltransferase F (476 aa).

S-adenosyl-L-methionine is bound by residues 125 to 131 (AAAPGSK), glutamate 149, aspartate 176, and aspartate 194. Cysteine 247 functions as the Nucleophile in the catalytic mechanism.

Belongs to the class I-like SAM-binding methyltransferase superfamily. RsmB/NOP family.

It localises to the cytoplasm. It carries out the reaction cytidine(1407) in 16S rRNA + S-adenosyl-L-methionine = 5-methylcytidine(1407) in 16S rRNA + S-adenosyl-L-homocysteine + H(+). Specifically methylates the cytosine at position 1407 (m5C1407) of 16S rRNA. The protein is Ribosomal RNA small subunit methyltransferase F of Aeromonas salmonicida (strain A449).